Consider the following 698-residue polypeptide: Probable Xaa-Pro aminopeptidase P (698 aa).

Mn(2+) is bound by residues D509, D520, E604, and E618.

It belongs to the peptidase M24B family. It depends on Mn(2+) as a cofactor.

It catalyses the reaction Release of any N-terminal amino acid, including proline, that is linked to proline, even from a dipeptide or tripeptide.. Its function is as follows. Catalyzes the removal of a penultimate prolyl residue from the N-termini of peptides. In Arthroderma benhamiae (strain ATCC MYA-4681 / CBS 112371) (Trichophyton mentagrophytes), this protein is Probable Xaa-Pro aminopeptidase P (AMPP).